Reading from the N-terminus, the 272-residue chain is uncharacterized protein (272 aa).

A run of 6 helical transmembrane segments spans residues 20-37 (VYLSVFIVLALYCVNLLI), 57-77 (HPLTYTIIPTYLVVLTAHFSL), 97-119 (LNVSCIAIVTTGYSVLIAFIMLM), 155-177 (SIATLLLLWLLLFLLGLLFYVIF), 184-203 (LVSLLFVFLLNIMNAAVTLG), and 234-256 (PYSIFVYWIMLIAVIYLIGWLVI).

It localises to the cell membrane. This is an uncharacterized protein from Halalkalibacterium halodurans (strain ATCC BAA-125 / DSM 18197 / FERM 7344 / JCM 9153 / C-125) (Bacillus halodurans).